We begin with the raw amino-acid sequence, 237 residues long: UPF0280 protein Mthe_1297 (237 aa).

It belongs to the UPF0280 family.

This is UPF0280 protein Mthe_1297 from Methanothrix thermoacetophila (strain DSM 6194 / JCM 14653 / NBRC 101360 / PT) (Methanosaeta thermophila).